Here is a 535-residue protein sequence, read N- to C-terminus: Thermosome subunit gamma (535 aa).

This sequence belongs to the TCP-1 chaperonin family. Forms a Heterooligomeric complex of two stacked eight-membered rings.

Functionally, molecular chaperone; binds unfolded polypeptides in vitro, and has a weak ATPase activity. The chain is Thermosome subunit gamma (thsC) from Saccharolobus solfataricus (strain ATCC 35092 / DSM 1617 / JCM 11322 / P2) (Sulfolobus solfataricus).